The sequence spans 142 residues: Large ribosomal subunit protein uL11 (142 aa).

Belongs to the universal ribosomal protein uL11 family. In terms of assembly, part of the ribosomal stalk of the 50S ribosomal subunit. Interacts with L10 and the large rRNA to form the base of the stalk. L10 forms an elongated spine to which L12 dimers bind in a sequential fashion forming a multimeric L10(L12)X complex. Post-translationally, one or more lysine residues are methylated.

Functionally, forms part of the ribosomal stalk which helps the ribosome interact with GTP-bound translation factors. The sequence is that of Large ribosomal subunit protein uL11 from Serratia marcescens.